A 118-amino-acid chain; its full sequence is Holo-[acyl-carrier-protein] synthase (118 aa).

Mg(2+)-binding residues include Asp8 and Glu58.

The protein belongs to the P-Pant transferase superfamily. AcpS family. Mg(2+) is required as a cofactor.

The protein localises to the cytoplasm. It catalyses the reaction apo-[ACP] + CoA = holo-[ACP] + adenosine 3',5'-bisphosphate + H(+). Transfers the 4'-phosphopantetheine moiety from coenzyme A to a Ser of acyl-carrier-protein. The polypeptide is Holo-[acyl-carrier-protein] synthase (Listeria innocua serovar 6a (strain ATCC BAA-680 / CLIP 11262)).